A 156-amino-acid chain; its full sequence is Large ribosomal subunit protein uL23 (156 aa).

The segment covering 1-19 has biased composition (basic and acidic residues); it reads MAPKAKKEAPAPPKAEAKA. The tract at residues 1–67 is disordered; sequence MAPKAKKEAP…PKYPRKSAPR (67 aa). N,N,N-trimethylalanine is present on alanine 2. A Glycyl lysine isopeptide (Lys-Gly) (interchain with G-Cter in SUMO2) cross-link involves residue lysine 14. A compositionally biased stretch (basic residues) spans 20-67; that stretch reads KALKAKKAVLKGVHSHKKKKIRTSPTFRRPKTLRLRRQPKYPRKSAPR. The beta-like import receptor binding (BIB) domain stretch occupies residues 32–74; the sequence is VHSHKKKKIRTSPTFRRPKTLRLRRQPKYPRKSAPRRNKLDHY. Arginine 41 carries the post-translational modification Citrulline. Residue serine 43 is modified to Phosphoserine. Threonine 45 bears the Phosphothreonine mark. An N6-acetyllysine modification is found at lysine 70.

It belongs to the universal ribosomal protein uL23 family. As to quaternary structure, component of the large ribosomal subunit. Interacts with LYAR and GNL2. Interacts with MDM2; this interaction may promote MDM2-mediated p53/TP53 polyubiquitination. Directly interacts (via BIB domain) with IPO5, IPO7, KPNB1 and TNPO1; these interactions are involved in RPL23A nuclear import for the assembly of ribosomal subunits. Interacts with IPO8. Post-translationally, N-terminus is methylated by METTL11A/NTM1. In terms of processing, citrullinated by PADI4.

It is found in the cytoplasm. The protein resides in the nucleus. Functionally, component of the large ribosomal subunit. The ribosome is a large ribonucleoprotein complex responsible for the synthesis of proteins in the cell. Binds a specific region on the 26S rRNA. May promote p53/TP53 degradation possibly through the stimulation of MDM2-mediated TP53 polyubiquitination. In Bos taurus (Bovine), this protein is Large ribosomal subunit protein uL23 (RPL23A).